Consider the following 114-residue polypeptide: UPF0342 protein LCA_0622 (114 aa).

The protein belongs to the UPF0342 family.

In Latilactobacillus sakei subsp. sakei (strain 23K) (Lactobacillus sakei subsp. sakei), this protein is UPF0342 protein LCA_0622.